A 560-amino-acid polypeptide reads, in one-letter code: Putative transport protein VIBHAR_02636 (560 aa).

The next 5 membrane-spanning stretches (helical) occupy residues 8-28 (LLEQ…LAFG), 37-57 (LGNS…GFSF), 66-86 (FMLF…GIFF), 91-111 (HYFI…YFCS), and 164-184 (VGYA…AKLL). RCK C-terminal domains lie at 205 to 292 (LGNS…FRNG) and 293 to 376 (KEVF…KIGF). Transmembrane regions (helical) follow at residues 386-406 (LLAF…TMTF), 409-429 (VSFS…LGFL), 450-470 (LGLM…IFEH), 478-498 (IIGL…LVGA), 505-525 (SALL…MDVV), and 539-559 (AGTY…LIIL).

The protein belongs to the AAE transporter (TC 2.A.81) family. YbjL subfamily.

Its subcellular location is the cell membrane. This Vibrio campbellii (strain ATCC BAA-1116) protein is Putative transport protein VIBHAR_02636.